Consider the following 770-residue polypeptide: MPKGRQKVPHLDAHLGLPICLWLELAIFFLVPQVMGLSEAGGLDILGTGGLSWAVHLDSLEGERKEESLTQQADAVAQAAGLVNAGRIGELQGHYLFVQPTGHRQAMEVEAMRQQAEAVLARHEAVRWHSEQTLLKRAKRSIHFNDPKYPQQWHLNNRRSPGRDINVTGVWERNVTGRGVTVVVVDDGVEHTVQDIAPNYSPEGSYDLNSNDPDPMPHPDEENGNHHGTRCAGEIAAVPNNSFCAVGVAYGSRIAGIRVLDGPLTDSMEAVAFNKHYQINDIYSCSWGPDDDGKTVDGPHQLGKAALQHGVMAGRQGFGSIFVVASGNGGQHNDNCNYDGYANSIYTVTIGAVDEEGRMPFYAEECASMLAVTFSGGDKMLRSIVTTDWDLQKGTGCTEGHTGTSAAAPLAAGMIALMLQVRPCLTWRDVQHIIVFTAIQYEDHHADWLTNEAGFSHSHQHGFGLLNAWRLVNAAKIWTSVPYLASYVSPMLKENKAVPRSPHSLEVLWNVSRTDLEMSGLKTLEHVAVTVSITHPRRGSLELKLFCPSGMMSLIGAPRSMDSDPNGFNAWTFSTVRCWGERARGVYRLVIRDVGDEPLQMGILQQWQLTLYGSMWSPVDIKDRQSLLESAMSGKYLHDGFTLPCPPGLKIPEEDGYTITPNTLKTLVLVGCFSVFWTIYYMLEVCLSQRNKASTHGCRKGCCPWAPRRQNSKDAGTALESMPLCSSKDLDGVDSEHGDCTTASSFLAPELDCPPHQPPDLLQGKSGQIC.

A signal peptide spans 1–36 (MPKGRQKVPHLDAHLGLPICLWLELAIFFLVPQVMG). Residues 37 to 140 (LSEAGGLDIL…EQTLLKRAKR (104 aa)) constitute a propeptide that is removed on maturation. Topologically, residues 141 to 666 (SIHFNDPKYP…YTITPNTLKT (526 aa)) are extracellular. Residues 152–472 (QWHLNNRRSP…FGLLNAWRLV (321 aa)) enclose the Peptidase S8 domain. N166 and N174 each carry an N-linked (GlcNAc...) asparagine glycan. D186 functions as the Charge relay system in the catalytic mechanism. Residues 195-228 (DIAPNYSPEGSYDLNSNDPDPMPHPDEENGNHHG) are disordered. The segment covering 215 to 225 (PMPHPDEENGN) has biased composition (basic and acidic residues). H227 acts as the Charge relay system in catalysis. Residue N240 is glycosylated (N-linked (GlcNAc...) asparagine). The active-site Charge relay system is S405. Residues 480-617 (SVPYLASYVS…QLTLYGSMWS (138 aa)) enclose the P/Homo B domain. N510 carries N-linked (GlcNAc...) asparagine glycosylation. A helical transmembrane segment spans residues 667-687 (LVLVGCFSVFWTIYYMLEVCL). The Cytoplasmic segment spans residues 688–770 (SQRNKASTHG…LLQGKSGQIC (83 aa)).

This sequence belongs to the peptidase S8 family. Requires Ca(2+) as cofactor. Widely expressed. Expressed in brain, lung, muscle, heart, liver, kidney, spleen and thymus.

The protein resides in the golgi apparatus. The protein localises to the trans-Golgi network membrane. With respect to regulation, inhibited by zinc and copper. Serine endoprotease that processes various proproteins by cleavage at paired basic amino acids, recognizing the RXXX[KR]R consensus motif. Likely functions in the constitutive secretory pathway. This chain is Proprotein convertase subtilisin/kexin type 7 (Pcsk7), found in Mus musculus (Mouse).